We begin with the raw amino-acid sequence, 387 residues long: MAKSNYVFTSESVAEGHPDKVCDRISDAVVDLFLTHDPYARVACETLATTNRVVIAGEVRGPKAALDQVETVARHAVKDIGYEQDGFHWEKFEFTCHLHQQSADIAMGVDAGTDKDEGAGDQGIMFGYACDETPALMPAPLFYSHSILKSLSEARHSGALSWLGPDAKSQVSLQYVDGRPVRATSVVVSTQHSESVPQEEIREAVRRHVLDVLPDGWMCPEDTFYVNPTGRFVIGGPDGDAGLTGRKIIVDTYGGAAPHGGGAFSGKDPTKVDRSAAYAARYLAKNVVAAGLARKCTIQLSYAIGVSYPLSVYIDTAGTGQVDEDKLSDVLRQLMNLSPRGIREHLKLNRPIYARTAAYGHFGREPDADGGFSWEKTDLVDALRRAF.

His-17 lines the ATP pocket. Residue Asp-19 participates in Mg(2+) binding. Residue Glu-45 participates in K(+) binding. Glu-58 and Gln-101 together coordinate L-methionine. Residues 101-111 are flexible loop; it reads QSADIAMGVDA. ATP is bound by residues 166-168, 231-232, Asp-240, 246-247, Ala-263, and Lys-267; these read DAK, RF, and RK. Asp-240 is a binding site for L-methionine. Position 271 (Lys-271) interacts with L-methionine.

Belongs to the AdoMet synthase family. In terms of assembly, homotetramer; dimer of dimers. Mg(2+) serves as cofactor. The cofactor is K(+).

Its subcellular location is the cytoplasm. It catalyses the reaction L-methionine + ATP + H2O = S-adenosyl-L-methionine + phosphate + diphosphate. Its pathway is amino-acid biosynthesis; S-adenosyl-L-methionine biosynthesis; S-adenosyl-L-methionine from L-methionine: step 1/1. Catalyzes the formation of S-adenosylmethionine (AdoMet) from methionine and ATP. The overall synthetic reaction is composed of two sequential steps, AdoMet formation and the subsequent tripolyphosphate hydrolysis which occurs prior to release of AdoMet from the enzyme. The chain is S-adenosylmethionine synthase from Rhodospirillum centenum (strain ATCC 51521 / SW).